We begin with the raw amino-acid sequence, 294 residues long: Acetylglutamate kinase (294 aa).

Residues 63 to 64 (GG), Arg85, and Asn188 each bind substrate.

It belongs to the acetylglutamate kinase family. ArgB subfamily.

The protein resides in the cytoplasm. The enzyme catalyses N-acetyl-L-glutamate + ATP = N-acetyl-L-glutamyl 5-phosphate + ADP. Its pathway is amino-acid biosynthesis; L-arginine biosynthesis; N(2)-acetyl-L-ornithine from L-glutamate: step 2/4. Its function is as follows. Catalyzes the ATP-dependent phosphorylation of N-acetyl-L-glutamate. This Methanococcus aeolicus (strain ATCC BAA-1280 / DSM 17508 / OCM 812 / Nankai-3) protein is Acetylglutamate kinase.